The primary structure comprises 306 residues: Agmatinase (306 aa).

Mn(2+)-binding residues include histidine 126, aspartate 149, histidine 151, aspartate 153, aspartate 230, and aspartate 232.

It belongs to the arginase family. Agmatinase subfamily. Mn(2+) is required as a cofactor.

It catalyses the reaction agmatine + H2O = urea + putrescine. The protein operates within amine and polyamine biosynthesis; putrescine biosynthesis via agmatine pathway; putrescine from agmatine: step 1/1. Its function is as follows. Catalyzes the formation of putrescine from agmatine. The protein is Agmatinase of Salmonella dublin (strain CT_02021853).